The chain runs to 316 residues: Pantothenate kinase (316 aa).

Position 95–102 (95–102) interacts with ATP; the sequence is GSVAVGKS.

It belongs to the prokaryotic pantothenate kinase family.

The protein localises to the cytoplasm. The catalysed reaction is (R)-pantothenate + ATP = (R)-4'-phosphopantothenate + ADP + H(+). Its pathway is cofactor biosynthesis; coenzyme A biosynthesis; CoA from (R)-pantothenate: step 1/5. The sequence is that of Pantothenate kinase from Shewanella piezotolerans (strain WP3 / JCM 13877).